The primary structure comprises 1272 residues: uncharacterized protein (1272 aa).

Coiled-coil stretches lie at residues Ile-185–Asn-212, Lys-246–Ala-274, and Ala-607–Ile-640. Residues Glu-1179–Thr-1231 form a disordered region. The span at Val-1189–Pro-1203 shows a compositional bias: pro residues. The span at Pro-1219–Thr-1231 shows a compositional bias: low complexity.

This is an uncharacterized protein from Magallana gigas (Pacific oyster).